The chain runs to 687 residues: Bifunctional lysine-specific demethylase and histidyl-hydroxylase NO66 (687 aa).

Residues 1 to 174 (MSDKNKKVSA…RSCPLPSKKN (174 aa)) form a disordered region. A compositionally biased stretch (basic and acidic residues) spans 23–32 (DVQKGTKNSD). 2 stretches are compositionally biased toward low complexity: residues 33–50 (KNGA…SKNG) and 58–74 (KKNG…SSSS). The span at 75 to 96 (GEDEEDDSTDSSDEYESSESGE) shows a compositional bias: acidic residues. Polar residues-rich tracts occupy residues 100–116 (LNSH…ANTR) and 136–156 (RTSS…QQPK). Residues 347-483 (NPSSYLVQLR…NLMEKLMPLV (137 aa)) form the JmjC domain. Residues histidine 387, aspartate 389, and histidine 449 each coordinate Fe cation.

Belongs to the ROX family. NO66 subfamily. The cofactor is Fe(2+).

It localises to the nucleus. It carries out the reaction N(6),N(6)-dimethyl-L-lysyl(36)-[histone H3] + 2 2-oxoglutarate + 2 O2 = L-lysyl(36)-[histone H3] + 2 formaldehyde + 2 succinate + 2 CO2. Its function is as follows. Oxygenase that can act as both a histone lysine demethylase and a ribosomal histidine hydroxylase. Specifically demethylates 'Lys-4' (H3K4me) and 'Lys-36' (H3K36me) of histone H3, thereby playing a central role in histone code. This is Bifunctional lysine-specific demethylase and histidyl-hydroxylase NO66 from Drosophila persimilis (Fruit fly).